The chain runs to 988 residues: Chloride channel protein 1 (988 aa).

At 1-118 (MEQSRSQQRG…VVRRKLGEDG (118 aa)) the chain is on the cytoplasmic side. Basic and acidic residues predominate over residues 65 to 75 (HKEQFSDREQD). Positions 65-92 (HKEQFSDREQDIGMPKKTGSSSTVDSKD) are disordered. The helical transmembrane segment at 119 to 150 (IFLVLLGLLMALVSWSMDYVSAKSLQAYKWSY) threads the bilayer. Residues 151 to 158 (AQMQPSLP) are Extracellular-facing. Residues 159–179 (LQFLVWVTFPLVLILFSALFC) form a helical membrane-spanning segment. The Cytoplasmic segment spans residues 180 to 183 (HLIS). The note=Loop between two helices intramembrane region spans 184–189 (PQAVGS). The short motif at 188-192 (GSGIP) is the Selectivity filter part_1 element. Residue Ser189 participates in chloride binding. Positions 190–195 (GIPEMK) form an intramembrane region, helical. Residues 196–208 (TILRGVVLKEYLT) lie on the Cytoplasmic side of the membrane. The helical intramembrane region spans 209–224 (MKAFVAKVVALTAGLG). The note=Loop between two helices intramembrane region spans 225-230 (SGIPVG). The Selectivity filter part_2 motif lies at 230–234 (GKEGP). An intramembrane region (helical) is located at residues 231 to 246 (KEGPFVHIASICAAVL). Residues 247–268 (SKFMSVFCGVYEQPYYYSDILT) are Cytoplasmic-facing. 2 intramembrane regions (helical) span residues 269-280 (VGCAVGVGCCFG) and 281-290 (TPLGGVLFSI). At 291 to 301 (EVTSTYFAVRN) the chain is on the cytoplasmic side. Residues 302–321 (YWRGFFAATFSAFVFRVLAV) form a helical membrane-spanning segment. At 322-347 (WNKDAVTITALFRTNFRMDFPFDLKE) the chain is on the extracellular side. The helical transmembrane segment at 348–376 (LPAFAAIGICCGLLGAVFVYLHRQVMLGV) threads the bilayer. At 377–390 (RKHKALSQFLAKHR) the chain is on the cytoplasmic side. The helical transmembrane segment at 391–408 (LLYPGIVTFVIASFTFPP) threads the bilayer. Residues 409-414 (GMGQFM) are Extracellular-facing. Residues 415–418 (AGEL) constitute an intramembrane region (note=Loop between two helices). An intramembrane region (helical) is located at residues 419–426 (MPREAIST). Residues 427–457 (LFDNNTWVKHAGDPESLGQSAVWIHPRVNVV) are Extracellular-facing. The segment at residues 458-475 (IIIFLFFVMKFWMSIVAT) is an intramembrane region (helical). Residues 476–482 (TMPIPCG) constitute an intramembrane region (note=Loop between two helices). Positions 482 to 486 (GGFMP) match the Selectivity filter part_3 motif. Residues 483 to 498 (GFMPVFVLGAAFGRLV) constitute an intramembrane region (helical). Chloride is bound at residue Phe484. Residues 499–521 (GEIMAMLFPDGILFDDIIYKILP) lie on the Extracellular side of the membrane. The helical intramembrane region spans 522–538 (GGYAVIGAAALTGAVSH). Residues 539-540 (TV) constitute an intramembrane region (note=Loop between two helices). The segment at residues 541 to 554 (STAVICFELTGQIA) is an intramembrane region (helical). At 555-557 (HIL) the chain is on the extracellular side. Positions 558–571 (PMMVAVILANMVAQ) form an intramembrane region, helical. The segment at residues 572–575 (SLQP) is an intramembrane region (note=Loop between two helices). Positions 576-578 (SLY) form an intramembrane region, helical. Tyr578 lines the chloride pocket. At 579–988 (DSIIQVKKLP…DEEDEDELIL (410 aa)) the chain is on the cytoplasmic side. Residues 609–668 (MVRDVKFVSASYTYGELRTLLQTTTVKTLPLVDSKDSMILLGSVERSELQALLQRHLCPE) form the CBS 1 domain. The interval 713 to 764 (EDEDEDLSGKSELPPSLALHPSTTAPLSPEEPNGPLPGHKQQPEAPEPAGQR) is disordered. A CBS 2 domain is found at 821–876 (IDQSPFQLVEQTTLHKTHTLFSLLGLHLAYVTSMGKLRGVLALEELQKAIEGHTKS). A disordered region spans residues 880-988 (LRPPLASFRN…DEEDEDELIL (109 aa)). Phosphoserine is present on Ser886. Over residues 887 to 906 (FRNTTSTRKSTGAPPSSAEN) the composition is skewed to polar residues. Over residues 929 to 941 (TPVPSPSPEPPLS) the composition is skewed to pro residues. Composition is skewed to acidic residues over residues 950-967 (ELEE…EELA) and 979-988 (DEEDEDELIL).

The protein belongs to the chloride channel (TC 2.A.49) family. ClC-1/CLCN1 subfamily. Homodimer. As to expression, predominantly expressed in skeletal muscles.

The protein localises to the cell membrane. It localises to the sarcolemma. Its subcellular location is the T-tubule. It catalyses the reaction chloride(in) = chloride(out). The catalysed reaction is thiocyanate(in) = thiocyanate(out). It carries out the reaction bromide(in) = bromide(out). The enzyme catalyses nitrate(in) = nitrate(out). It catalyses the reaction iodide(out) = iodide(in). Its activity is regulated as follows. Modulated by membrane voltage with depolarization favouring channel opening and hyperpolarization favouring channel closure. Inhibited by acidic pH and ATP binding due to a shift of voltage dependence of common gating to more positive voltages. Inhibited by 9-anthracene-carboxylic. Voltage-gated chloride channel involved in skeletal muscle excitability. Generates most of the plasma membrane chloride conductance in skeletal muscle fibers, stabilizes the resting membrane potential and contributes to the repolarization phase during action potential firing. Forms a homodimeric channel where each subunit has its own ion conduction pathway. Conducts double-barreled currents controlled by two types of gates, two fast glutamate gates that control each subunit independently and a slow common gate that opens and shuts off both subunits simultaneously. Has a significant open probability at muscle resting potential and is further activated upon membrane depolarization. Permeable to small monovalent anions with ion selectivity for chloride &gt; thiocyanate &gt; bromide &gt; nitrate &gt; iodide. The polypeptide is Chloride channel protein 1 (Homo sapiens (Human)).